The primary structure comprises 358 residues: MANDENKQKALAAALGQIEKQFGKGSIMRLGENRSMDVETISTGSLSLDIALGAGGLPMGRIVEIYGPESSGKTTLTLQVIAAAQREGRTCAFIDAEHALDPVYAKKLGVDIDNLLCSQPDTGEQALEICDALSRSGAVDVIIVDSVAALTPKAEIEGEIGDSHMGLAARMMSQAMRKLAGNLKNSNTLLIFINQIRMKIGVMFGNPETTTGGNALKFYASVRLDIRRTGSVKNGDEVVGSETRVKVVKNKVAAPFKQAEFQILYGEGINTLGELIDLGVKHKMVEKAGAWYSYNGDKIGQGKANATIYLKEHPETAAELNKKLRDLLLHNTGDFSSAASDYVTDYEDNTEEVNNEEF.

67 to 74 (GPESSGKT) provides a ligand contact to ATP.

This sequence belongs to the RecA family.

The protein localises to the cytoplasm. In terms of biological role, can catalyze the hydrolysis of ATP in the presence of single-stranded DNA, the ATP-dependent uptake of single-stranded DNA by duplex DNA, and the ATP-dependent hybridization of homologous single-stranded DNAs. It interacts with LexA causing its activation and leading to its autocatalytic cleavage. This chain is Protein RecA, found in Xenorhabdus nematophila (strain ATCC 19061 / DSM 3370 / CCUG 14189 / LMG 1036 / NCIMB 9965 / AN6).